The primary structure comprises 309 residues: Malate dehydrogenase (309 aa).

Residues 8–13 (GAGLVG) and aspartate 33 contribute to the NAD(+) site. Substrate contacts are provided by arginine 82 and arginine 88. Residues asparagine 95 and 118–120 (VSN) each bind NAD(+). The substrate site is built by asparagine 120 and arginine 151. The Proton acceptor role is filled by histidine 175.

Belongs to the LDH/MDH superfamily. MDH type 3 family.

It catalyses the reaction (S)-malate + NAD(+) = oxaloacetate + NADH + H(+). Its function is as follows. Catalyzes the reversible oxidation of malate to oxaloacetate. This Pseudomonas putida (strain GB-1) protein is Malate dehydrogenase.